A 101-amino-acid chain; its full sequence is Isochorismate pyruvate lyase (101 aa).

Residues 4-94 form the Chorismate mutase domain; sequence PEDCTGLADI…WYIAEQIKYW (91 aa). Substrate contacts are provided by Arg-14, Arg-31, Lys-42, and Gln-90.

In terms of assembly, dimer of dimers.

It carries out the reaction isochorismate = salicylate + pyruvate. The enzyme catalyses chorismate = prephenate. It participates in siderophore biosynthesis; salicylate biosynthesis. With respect to regulation, inhibited by endo-oxabicyclic diacid resembling to the conformation of the transition state. Its function is as follows. Involved in the incorporation of salicylate into the siderophore pyochelin. Catalyzes the elimination of the enolpyruvyl side chain from isochorismate to yield salicylate and pyruvate via a rare pericyclic hydrogen transfer mechanism from C2 to C5. PchB also catalyzes the nonphysiological Claisen rearrangement of chorismate to prephenate in which the pyruvylenol tail is transferred from a C3 ether linkage to a C1-C9 linkage. The sequence is that of Isochorismate pyruvate lyase from Pseudomonas aeruginosa (strain ATCC 15692 / DSM 22644 / CIP 104116 / JCM 14847 / LMG 12228 / 1C / PRS 101 / PAO1).